The primary structure comprises 221 residues: MLQMNLEELRRIQEEMSRSVVLEDLIPLEELEYVVGVDQAFISDEVVSCAVKLTFPELEVVDKAVRVEKVTFPYIPTFLMFREGEPAVNAVKGLVDDRAAIMVDGSGIAHPRRCGLATYIALKLRKPTVGITKKRLFGEMVEVEDGLWRLLDGSETIGYALKSCRRCKPIFISPGSYISPDSALELTRKCLKGYKLPEPIRIADKLTKEVKRELTPTSKLK.

Aspartate 38 and aspartate 104 together coordinate Mg(2+).

It belongs to the endonuclease V family. Mg(2+) serves as cofactor.

The protein localises to the cytoplasm. The catalysed reaction is Endonucleolytic cleavage at apurinic or apyrimidinic sites to products with a 5'-phosphate.. DNA repair enzyme involved in the repair of deaminated bases. Selectively cleaves double-stranded DNA at the second phosphodiester bond 3' to a deoxyinosine leaving behind the intact lesion on the nicked DNA. Recognizes only deoxyinosine. The sequence is that of Endonuclease V from Archaeoglobus fulgidus (strain ATCC 49558 / DSM 4304 / JCM 9628 / NBRC 100126 / VC-16).